Here is a 342-residue protein sequence, read N- to C-terminus: Sesquiterpene synthase MBR_09977 (342 aa).

Positions 91 and 96 each coordinate Mg(2+). The DDXXXD motif signature appears at 91–96 (DDLFVD). A substrate-binding site is contributed by Arg-184. Positions 230, 234, and 238 each coordinate Mg(2+).

Belongs to the terpene synthase family. The cofactor is Mg(2+).

It carries out the reaction (2E,6E)-farnesyl diphosphate + H2O = (+)-corvol ether B + diphosphate. The enzyme catalyses (2E,6E)-farnesyl diphosphate + H2O = (+)-corvol ether A + diphosphate. Its function is as follows. Terpene synthase that catalyzes the conversion of (2E,6E)-farnesyl diphosphate (FPP) into sesquiterpenes which are important for fungi-environment interactions. Produces a mixture consisting of 8 sesquiterpenes including corvol ethers A and B, as well as traces of epizonarene, gamma-cadinene, delta-cadinene, alpha-cadinene, alpha-cadinol, and an unidentified sesquiterpene. The major product is corvol ether A. The polypeptide is Sesquiterpene synthase MBR_09977 (Metarhizium brunneum (strain ARSEF 3297)).